We begin with the raw amino-acid sequence, 316 residues long: tRNA pseudouridine synthase B (316 aa).

Asp-38 (nucleophile) is an active-site residue. The PUA domain occupies 238–312 (YPEVIVKSSA…PVCVLARQAG (75 aa)).

Belongs to the pseudouridine synthase TruB family. Type 1 subfamily.

The enzyme catalyses uridine(55) in tRNA = pseudouridine(55) in tRNA. Functionally, responsible for synthesis of pseudouridine from uracil-55 in the psi GC loop of transfer RNAs. The sequence is that of tRNA pseudouridine synthase B from Pelotomaculum thermopropionicum (strain DSM 13744 / JCM 10971 / SI).